We begin with the raw amino-acid sequence, 657 residues long: MRSGDAEIKGIKPKVIEEYSLSQGSGPSNDSWKSLMSSAKDTPLQYDHMNRESLKKYFNPNAQLIEDPLDKPIQYRVCEKCGKPLALTAIVDHLENHCAGASGKSSTDPRDESTRETIRNGVESTGRNNNDDDNSNDNNNDDDDDDDNDDNEDDDDADDDDDNSNGANYKKNDSSFNPLKRSTSMESANTPNMDTKRSKTGTPQTFSSSIKKQKKVKQRNPTEKHLIDFNKQCGVELPEGGYCARSLTCKSHSMGAKRAVSGRSKPYDVLLADYHREHQTKIGAAAEKRAKQQELQKLQKQIQKEQKKHTQQQKQGQRSKQRNVNGGKSAKNGGKSTVHNGNNINEIGHVNLTPEEETTQVLNGVSRSFPLPLESTVLSSVRYRTKYFRMREMFASSFSVKPGYTSPGYGAIHSRVGCLDLDRTTDYKFRVRTPQPINHLTNQNLNPKQIQRLQQQRALQAQLLSQQQQQQQQQQQHHSPQAQAQASTQQPTQGMVPNHFPGGATNSSFNANVSSKQIQQQQQQQQHKSQDTGLTPLEIQSQQQKLRQQQLQQQKFEAAASYLANATKLMQESNQDSHLSGTHNNNSSKNGNNNLMTMKASISSPNTSVNSIQSPPSVNSVNGSGQGVSTGINVSGNNGRIEVGIGNSVNPYNGRIN.

Cys-78, Cys-81, His-93, and Cys-98 together coordinate Zn(2+). Disordered regions lie at residues 98–225 (CAGA…TEKH), 287–353 (EKRA…VNLT), 469–532 (QQQQ…SQDT), and 572–636 (ESNQ…NVSG). The segment covering 107-118 (TDPRDESTRETI) has biased composition (basic and acidic residues). The segment covering 131 to 163 (DDDNSNDNNNDDDDDDDNDDNEDDDDADDDDDN) has biased composition (acidic residues). Composition is skewed to polar residues over residues 174-193 (SSFNPLKRSTSMESANTPNM) and 200-210 (TGTPQTFSSSI). Positions 220-286 (NPTEKHLIDF…EHQTKIGAAA (67 aa)) constitute an SCA7 domain. The span at 306–321 (QKKHTQQQKQGQRSKQ) shows a compositional bias: basic residues. Low complexity-rich tracts occupy residues 325–336 (NGGKSAKNGGKS) and 469–493 (QQQQQQQQHHSPQAQAQASTQQPTQ). Residues 504 to 516 (ATNSSFNANVSSK) are compositionally biased toward polar residues. Residues 517–526 (QIQQQQQQQQ) are compositionally biased toward low complexity. Residues 572–583 (ESNQDSHLSGTH) are compositionally biased toward polar residues. Residues 584–594 (NNNSSKNGNNN) show a composition bias toward low complexity. Positions 600 to 636 (ASISSPNTSVNSIQSPPSVNSVNGSGQGVSTGINVSG) are enriched in polar residues.

Belongs to the ataxin-7 family. In terms of assembly, component of the 1.8 MDa SAGA (Spt-Ada-Gcn5 acetyltransferase) complex, which is composed of 19 subunits TRA1, SPT7, TAF5, NGG1/ADA3, SGF73, SPT20/ADA5, SPT8, TAF12, TAF6, HFI1/ADA1, UBP8, GCN5, ADA2, SPT3, SGF29, TAF10, TAF9, SGF11 and SUS1. The SAGA complex is composed of 4 modules, namely the HAT (histone acetyltransferase) module (GCN5, ADA2, NGG1/ADA3 and SGF29), the DUB (deubiquitinating) module (UBP8, SGF11, SGF73 and SUS1), the core or TAF (TBP-associated factor) module (TAF5, TAF6, TAF9, TAF10 and TAF12), and the Tra1 or SPT (Suppressor of Ty) module (TRA1, HFI1/ADA1, SPT3, SPT7, SPT8 and SPT20/ADA5). The Tra1/SPT module binds activators, the core module recruits TBP (TATA-binding protein), the HAT module contains the histone H3 acetyltransferase GCN5, and the DUB module comprises the histone H2B deubiquitinase UBP8. Also identified in an altered form of SAGA, named SALSA (SAGA altered, Spt8 absent) or SLIK (SAGA-like) complex, which contains a C-terminal truncated form of SPT7 and is missing SPT8. However, it has been shown that the SAGA and SAGA-like SALSA/SLIK transcriptional coactivators are structurally and biochemically equivalent.

Its subcellular location is the nucleus. It is found in the cytoplasm. Functionally, component of the transcription coactivator SAGA complex. SAGA acts as a general cofactor required for essentially all RNA polymerase II transcription. At the promoters, SAGA is required for transcription pre-initiation complex (PIC) recruitment. It influences RNA polymerase II transcriptional activity through different activities such as TBP interaction (via core/TAF module) and promoter selectivity, interaction with transcription activators (via Tra1/SPT module), and chromatin modification through histone acetylation (via HAT module) and deubiquitination (via DUB module). SAGA preferentially acetylates histones H3 (to form H3K9ac, H3K14ac, H3K18ac and H3K23ac) and H2B and deubiquitinates histone H2B. SAGA interacts with DNA via upstream activating sequences (UASs). Also identified in a modified version of SAGA named SALSA or SLIK. The cleavage of SPT7 and the absence of the SPT8 subunit in SLIK neither drive any major conformational differences in its structure compared with SAGA, nor significantly affect HAT, DUB, or DNA-binding activities. SGF73 tethers the DUB module to the rest of the SAGA complex through its central domain and activates the ubiquitin hydrolase UBP8 by maintaining its catalytic domain in an active conformation. SGF73 mediates recruitment of the TREX-2 mRNA export factors SAC3 and THP1 to SAGA, which is crucial to target TREX-2 to the nuclear pore complex (NPC) necessary for export of mRNA. Upon environmental stress, involved in the bypass of the canonical mRNA export process for the immediate export of stress-related transcripts to maintain proteostasis. The chain is SAGA complex subunit SGF73 (SGF73) from Saccharomyces cerevisiae (strain ATCC 204508 / S288c) (Baker's yeast).